The chain runs to 139 residues: Aspartate 1-decarboxylase (139 aa).

The active-site Schiff-base intermediate with substrate; via pyruvic acid is the Ser-25. The residue at position 25 (Ser-25) is a Pyruvic acid (Ser). Position 57 (Thr-57) interacts with substrate. Residue Tyr-58 is the Proton donor of the active site. 73–75 (GAA) provides a ligand contact to substrate. The disordered stretch occupies residues 117–139 (TGSDPADAPAGSGLLRGDRPAGR).

Belongs to the PanD family. As to quaternary structure, heterooctamer of four alpha and four beta subunits. The cofactor is pyruvate. Post-translationally, is synthesized initially as an inactive proenzyme, which is activated by self-cleavage at a specific serine bond to produce a beta-subunit with a hydroxyl group at its C-terminus and an alpha-subunit with a pyruvoyl group at its N-terminus.

Its subcellular location is the cytoplasm. The enzyme catalyses L-aspartate + H(+) = beta-alanine + CO2. It functions in the pathway cofactor biosynthesis; (R)-pantothenate biosynthesis; beta-alanine from L-aspartate: step 1/1. Its function is as follows. Catalyzes the pyruvoyl-dependent decarboxylation of aspartate to produce beta-alanine. The sequence is that of Aspartate 1-decarboxylase from Nocardioides sp. (strain ATCC BAA-499 / JS614).